The chain runs to 601 residues: RNA polymerase II C-terminal domain phosphatase-like 5 (601 aa).

The tract at residues 1–20 (MFVAKNLSPERESKRQKKEP) is disordered. Positions 8–20 (SPERESKRQKKEP) are enriched in basic and acidic residues. FCP1 homology domains are found at residues 84-259 (LNMK…TDES) and 381-553 (LNEK…DESE).

As to expression, expressed in roots, seedlings, hypocotyls, cotyledons, leaves, siliques and flowers.

It localises to the nucleus. The catalysed reaction is O-phospho-L-seryl-[protein] + H2O = L-seryl-[protein] + phosphate. The enzyme catalyses O-phospho-L-threonyl-[protein] + H2O = L-threonyl-[protein] + phosphate. Mediates the dephosphorylation of 'Ser-2' of the heptad repeats YSPTSPS in the C-terminal domain of the largest RNA polymerase II subunit (RPB1). This promotes the activity of RNA polymerase II. Positively regulates abscisic acid (ABA) and drought responses, including the regulation of specific genes expression. The chain is RNA polymerase II C-terminal domain phosphatase-like 5 from Arabidopsis thaliana (Mouse-ear cress).